The chain runs to 128 residues: Large ribosomal subunit protein bL17 (128 aa).

Belongs to the bacterial ribosomal protein bL17 family. As to quaternary structure, part of the 50S ribosomal subunit. Contacts protein L32.

The polypeptide is Large ribosomal subunit protein bL17 (Petrotoga mobilis (strain DSM 10674 / SJ95)).